The chain runs to 140 residues: 3-hydroxyacyl-[acyl-carrier-protein] dehydratase FabZ (140 aa).

His-48 is an active-site residue.

The protein belongs to the thioester dehydratase family. FabZ subfamily.

It is found in the cytoplasm. The enzyme catalyses a (3R)-hydroxyacyl-[ACP] = a (2E)-enoyl-[ACP] + H2O. Functionally, involved in unsaturated fatty acids biosynthesis. Catalyzes the dehydration of short chain beta-hydroxyacyl-ACPs and long chain saturated and unsaturated beta-hydroxyacyl-ACPs. The protein is 3-hydroxyacyl-[acyl-carrier-protein] dehydratase FabZ of Ligilactobacillus salivarius (strain UCC118) (Lactobacillus salivarius).